The following is a 401-amino-acid chain: MADNPASSSSQQLLALRVMRLARPKFAPVDGFSHDPVDPTGFGELLAGKVSEISKESRQDLPIGEYLIAPQMFENIYLGETFTFYVNVVNESEKTVSSVSLKCELQTSTQRVVLPCSVQDATIESSKCEGQVISHEVKEIGQHILICSVNYKTSNGENMYFRKFFKFPVSKPIDVKTKFYSAEDNANQDVYLEAQIENTSNANMFLEKVELDPSQHYNVTSIAHEDEFGDVGKLLKPKDIRQFLFCLTPADVHNTLGYKDLTSIGKLDMSWRTSMGEKGRLQTSALQRIAPGYGDVRLSVEKTPACVDVQKPFEVSCRLYNCSERALDLQLRLEQPSNRHLVFCSPSGVSLGQLPPSQHVDFSLNVFPVTVGIQSISGIRITDTFTKRIYEHDDIAQIFVS.

It belongs to the TRAPPC13 family.

The chain is Probable trafficking protein particle complex subunit 13 homolog from Caenorhabditis elegans.